The chain runs to 643 residues: Enzymatic polyprotein (643 aa).

The Peptidase A3A domain occupies 6-209; sequence NPNATFITVK…KEVNVPNNIP (204 aa). Aspartate 26 serves as the catalytic For protease activity. Positions 226 to 410 constitute a Reverse transcriptase domain; the sequence is VRKGIIEESK…QTIDFLGLTL (185 aa). Aspartate 296, aspartate 360, and aspartate 361 together coordinate Mg(2+).

Belongs to the caulimoviridae enzymatic polyprotein family.

It catalyses the reaction DNA(n) + a 2'-deoxyribonucleoside 5'-triphosphate = DNA(n+1) + diphosphate. Its function is as follows. Encodes for at least two polypeptides: protease (PR) and reverse transcriptase (RT). The protease processes the polyprotein in cis. Reverse transcriptase is multifunctional enzyme that converts the viral RNA genome into dsDNA in viral cytoplasmic capsids. This enzyme displays a DNA polymerase activity that can copy either DNA or RNA templates, and a ribonuclease H (RNase H) activity that cleaves the RNA strand of RNA-DNA heteroduplexes in a partially processive 3'- to 5'-endonucleasic mode. Neo-synthesized pregenomic RNA (pgRNA) are encapsidated, and reverse-transcribed inside the nucleocapsid. Partial (+)DNA is synthesized from the (-)DNA template and generates the relaxed circular DNA (RC-DNA) genome. After budding and infection, the RC-DNA migrates in the nucleus, and is converted into a plasmid-like covalently closed circular DNA (cccDNA). The sequence is that of Enzymatic polyprotein from Cestrum parqui (CmYLCV).